The primary structure comprises 460 residues: Glutamate--tRNA ligase 2 (460 aa).

Residues 8–18 carry the 'HIGH' region motif; sequence PSPTGFLHVGG. Residues 237-241 carry the 'KMSKS' region motif; it reads KLSKR. K240 is an ATP binding site.

This sequence belongs to the class-I aminoacyl-tRNA synthetase family. Glutamate--tRNA ligase type 1 subfamily. Monomer.

Its subcellular location is the cytoplasm. It carries out the reaction tRNA(Glu) + L-glutamate + ATP = L-glutamyl-tRNA(Glu) + AMP + diphosphate. Functionally, catalyzes the attachment of glutamate to tRNA(Glu) in a two-step reaction: glutamate is first activated by ATP to form Glu-AMP and then transferred to the acceptor end of tRNA(Glu). The protein is Glutamate--tRNA ligase 2 of Campylobacter fetus subsp. fetus (strain 82-40).